The sequence spans 329 residues: Tetraacyldisaccharide 4'-kinase (329 aa).

58–65 (SVGGTGKT) serves as a coordination point for ATP.

This sequence belongs to the LpxK family.

It catalyses the reaction a lipid A disaccharide + ATP = a lipid IVA + ADP + H(+). It functions in the pathway glycolipid biosynthesis; lipid IV(A) biosynthesis; lipid IV(A) from (3R)-3-hydroxytetradecanoyl-[acyl-carrier-protein] and UDP-N-acetyl-alpha-D-glucosamine: step 6/6. Its function is as follows. Transfers the gamma-phosphate of ATP to the 4'-position of a tetraacyldisaccharide 1-phosphate intermediate (termed DS-1-P) to form tetraacyldisaccharide 1,4'-bis-phosphate (lipid IVA). This Idiomarina loihiensis (strain ATCC BAA-735 / DSM 15497 / L2-TR) protein is Tetraacyldisaccharide 4'-kinase.